The following is a 550-amino-acid chain: Chaperonin GroEL (550 aa).

Residues 30–33 (TLGP), Lys-51, 87–91 (DGTTT), Gly-415, 481–483 (NAA), and Asp-497 contribute to the ATP site.

It belongs to the chaperonin (HSP60) family. In terms of assembly, forms a cylinder of 14 subunits composed of two heptameric rings stacked back-to-back. Interacts with the co-chaperonin GroES.

The protein resides in the cytoplasm. It catalyses the reaction ATP + H2O + a folded polypeptide = ADP + phosphate + an unfolded polypeptide.. Together with its co-chaperonin GroES, plays an essential role in assisting protein folding. The GroEL-GroES system forms a nano-cage that allows encapsulation of the non-native substrate proteins and provides a physical environment optimized to promote and accelerate protein folding. The chain is Chaperonin GroEL from Photobacterium profundum (strain SS9).